Here is a 372-residue protein sequence, read N- to C-terminus: uncharacterized protein (372 aa).

Positions 49–72 are disordered; that stretch reads FSHKGGGKGGGSGAGSNDGGCSGE. The segment covering 55–70 has biased composition (gly residues); sequence GKGGGSGAGSNDGGCS.

This is an uncharacterized protein from Halorubrum lacusprofundi (strain ATCC 49239 / DSM 5036 / JCM 8891 / ACAM 34).